Here is a 283-residue protein sequence, read N- to C-terminus: Polyamine aminopropyltransferase (283 aa).

Residues 2-237 (ELWYTEEHTD…GHWLFGFASK (236 aa)) form the PABS domain. Residue Gln31 coordinates S-methyl-5'-thioadenosine. Spermidine contacts are provided by His62 and Asp86. S-methyl-5'-thioadenosine-binding positions include Glu106 and 137–138 (DG). Asp155 functions as the Proton acceptor in the catalytic mechanism. Residue 155 to 158 (DSTD) participates in spermidine binding. Residue Pro162 coordinates S-methyl-5'-thioadenosine.

This sequence belongs to the spermidine/spermine synthase family. In terms of assembly, homodimer or homotetramer.

It localises to the cytoplasm. The catalysed reaction is S-adenosyl 3-(methylsulfanyl)propylamine + putrescine = S-methyl-5'-thioadenosine + spermidine + H(+). It functions in the pathway amine and polyamine biosynthesis; spermidine biosynthesis; spermidine from putrescine: step 1/1. Functionally, catalyzes the irreversible transfer of a propylamine group from the amino donor S-adenosylmethioninamine (decarboxy-AdoMet) to putrescine (1,4-diaminobutane) to yield spermidine. This chain is Polyamine aminopropyltransferase, found in Clostridium perfringens (strain ATCC 13124 / DSM 756 / JCM 1290 / NCIMB 6125 / NCTC 8237 / Type A).